Here is a 307-residue protein sequence, read N- to C-terminus: MKNKLLARVARLGGLSSALLLAGCELDVLDPKGPVGEGVKTLIATSTVAMLIVVIPTILETLLFAWQYRQSNTSAEYLPKWCHSNKIEVTIWGVPSLIILFLAVITYQTCHSLDPYKPLEAEANTKPLHVEVVALDWKWLFIYPEQGIATVNQLAIPVNTPIDFNITSDSVMNSFFIPRLGSMIYAMAGMQTQLHLLASEPGDYLGESANYSGRGFSDMKFHTLAVSGDEFNAWVEKVKSSSEQLDSQTYPKLAAPSENPVEYFAHVEPGMFNTIVAKYNNGMVMDKSTGKMIQVQQSAMSDMNMKE.

Residues 1–23 (MKNKLLARVARLGGLSSALLLAG) form the signal peptide. Residue C24 is the site of N-palmitoyl cysteine attachment. Residue C24 is the site of S-diacylglycerol cysteine attachment. 2 consecutive transmembrane segments (helical) span residues 46 to 66 (STVA…LFAW) and 87 to 107 (IEVT…VITY).

The protein belongs to the cytochrome c oxidase subunit 2 family. As to quaternary structure, heterotetramer of the subunits 1, 2, 3 and 4.

It is found in the cell membrane. The chain is Ubiquinol oxidase subunit 2 (cyaB) from Acetobacter aceti.